Consider the following 304-residue polypeptide: tRNA pseudouridine synthase B (304 aa).

Residue Asp-38 is the Nucleophile of the active site.

The protein belongs to the pseudouridine synthase TruB family. Type 1 subfamily.

The catalysed reaction is uridine(55) in tRNA = pseudouridine(55) in tRNA. In terms of biological role, responsible for synthesis of pseudouridine from uracil-55 in the psi GC loop of transfer RNAs. The sequence is that of tRNA pseudouridine synthase B from Listeria welshimeri serovar 6b (strain ATCC 35897 / DSM 20650 / CCUG 15529 / CIP 8149 / NCTC 11857 / SLCC 5334 / V8).